The primary structure comprises 307 residues: Nodulation protein NoeC (307 aa).

The next 8 membrane-spanning stretches (helical) occupy residues 46-66 (APLWLAFMTFCSVASGIYVLN), 91-111 (SGLTGVWMCLVLIALGGVCAI), 117-137 (LFAITASYVALSVIYVGKVRG), 140-160 (VLDLFVLSALYTTRILAGATA), 163-183 (IPVPASFLAFSAMAFVSLASI), 212-232 (IVALICVSAGYAAVVFLELFV), 238-258 (AQGPAPIFVSNAMCVVVAYWI), and 279-299 (VTDGSSLVCILGLALGLVFLM).

The protein resides in the cell membrane. The polypeptide is Nodulation protein NoeC (noeC) (Azorhizobium caulinodans (strain ATCC 43989 / DSM 5975 / JCM 20966 / LMG 6465 / NBRC 14845 / NCIMB 13405 / ORS 571)).